The sequence spans 337 residues: Follistatin (337 aa).

An N-terminal signal peptide occupies residues 1-22; that stretch reads PGGVCLLLLLLCQFMEDRSAQA. The region spanning 23-96 is the TB domain; it reads GNCWLRQAKN…TCENVDCGPG (74 aa). 18 disulfide bridges follow: Cys25-Cys48, Cys35-Cys81, Cys49-Cys84, Cys88-Cys99, Cys93-Cys109, Cys111-Cys143, Cys115-Cys136, Cys125-Cys157, Cys161-Cys172, Cys166-Cys182, Cys185-Cys218, Cys189-Cys211, Cys200-Cys232, Cys238-Cys249, Cys243-Cys260, Cys263-Cys295, Cys267-Cys288, and Cys277-Cys309. The Follistatin-like 1 domain occupies 87-110; sequence TCENVDCGPGKKCRMNKKNKPRCV. Residues 105–159 enclose the Kazal-like 1 domain; that stretch reads NKPRCVCAPDCSNITWKGPVCGLDGKTYRNECALLKARCKEQPELEVQYQGKCKK. N-linked (GlcNAc...) asparagine glycosylation occurs at Asn117. The Follistatin-like 2 domain occupies 160-183; it reads TCRDVFCPGSSTCVVDQTNNAYCV. A Kazal-like 2 domain is found at 179 to 234; sequence NAYCVTCNRICPEPTSSEQYLCGNDGVTYPSACHLRKATCLLGRSIGLAYEGKCIK. The 25-residue stretch at 237–261 folds into the Follistatin-like 3 domain; it reads SCEDIQCTGGKKCLWDFKVGRGRCS. A Kazal-like 3 domain is found at 254-311; that stretch reads KVGRGRCSLCGELCPESKSEEPVCASDNATYASECAMKEAACSSGVLLEVKHSGSCNS. N-linked (GlcNAc...) asparagine glycosylation occurs at Asn281. Residues 309–337 are disordered; the sequence is CNSISEDTEDEEEDEDQDYSFPISSILEW. Acidic residues predominate over residues 314–326; it reads EDTEDEEEDEDQD.

In terms of assembly, monomer.

The protein resides in the secreted. Functionally, binds directly to activin and functions as an activin antagonist. Specific inhibitor of the biosynthesis and secretion of pituitary follicle stimulating hormone (FSH). In Ovis aries (Sheep), this protein is Follistatin.